The following is a 337-amino-acid chain: Undecaprenyl-phosphate 4-deoxy-4-formamido-L-arabinose transferase (337 aa).

The next 2 helical transmembrane spans lie at 235 to 255 and 270 to 290; these read LSII…LLIV and FVLF…MGLL.

The protein belongs to the glycosyltransferase 2 family.

Its subcellular location is the cell inner membrane. The enzyme catalyses UDP-4-deoxy-4-formamido-beta-L-arabinose + di-trans,octa-cis-undecaprenyl phosphate = 4-deoxy-4-formamido-alpha-L-arabinopyranosyl di-trans,octa-cis-undecaprenyl phosphate + UDP. It functions in the pathway glycolipid biosynthesis; 4-amino-4-deoxy-alpha-L-arabinose undecaprenyl phosphate biosynthesis; 4-amino-4-deoxy-alpha-L-arabinose undecaprenyl phosphate from UDP-4-deoxy-4-formamido-beta-L-arabinose and undecaprenyl phosphate: step 1/2. It participates in bacterial outer membrane biogenesis; lipopolysaccharide biosynthesis. Catalyzes the transfer of 4-deoxy-4-formamido-L-arabinose from UDP to undecaprenyl phosphate. The modified arabinose is attached to lipid A and is required for resistance to polymyxin and cationic antimicrobial peptides. This Pseudomonas syringae pv. syringae (strain B728a) protein is Undecaprenyl-phosphate 4-deoxy-4-formamido-L-arabinose transferase.